The following is a 416-amino-acid chain: Probable 26S proteasome regulatory subunit rpn-6.2 (416 aa).

One can recognise a PCI domain in the interval 217–386 (YKTSFSYFYE…DTVVVYPKAD (170 aa)).

Belongs to the proteasome subunit S9 family. As to quaternary structure, component of the lid subcomplex of the 19S proteasome regulatory particle complex (also named PA700 complex). The 26S proteasome consists of a 20S proteasome core and two 19S regulatory subunits.

Functionally, component of the lid subcomplex of the 26S proteasome, a multiprotein complex involved in the ATP-dependent degradation of ubiquitinated proteins. In the complex, rpn-6.2 is required for proteasome assembly. The sequence is that of Probable 26S proteasome regulatory subunit rpn-6.2 (rpn-6.2) from Caenorhabditis elegans.